Reading from the N-terminus, the 643-residue chain is Threonine--tRNA ligase (643 aa).

The TGS domain occupies 1–61 (MPIITLPDGS…EQDATLEIIT (61 aa)). The segment at 243-534 (DHRKIGKALD…ITEEYAGFFP (292 aa)) is catalytic. Positions 334, 385, and 511 each coordinate Zn(2+).

The protein belongs to the class-II aminoacyl-tRNA synthetase family. Homodimer. The cofactor is Zn(2+).

It localises to the cytoplasm. The catalysed reaction is tRNA(Thr) + L-threonine + ATP = L-threonyl-tRNA(Thr) + AMP + diphosphate + H(+). Functionally, catalyzes the attachment of threonine to tRNA(Thr) in a two-step reaction: L-threonine is first activated by ATP to form Thr-AMP and then transferred to the acceptor end of tRNA(Thr). Also edits incorrectly charged L-seryl-tRNA(Thr). This Haemophilus influenzae (strain ATCC 51907 / DSM 11121 / KW20 / Rd) protein is Threonine--tRNA ligase.